Consider the following 143-residue polypeptide: UPF0651 protein P31B10.02, mitochondrial (143 aa).

The Oxidoreductase-like domain occupies I48 to R93.

Belongs to the UPF0651 family.

Its subcellular location is the mitochondrion. This is UPF0651 protein P31B10.02, mitochondrial from Schizosaccharomyces pombe (strain 972 / ATCC 24843) (Fission yeast).